The following is a 479-amino-acid chain: Glutamyl-tRNA(Gln) amidotransferase subunit A (479 aa).

Active-site charge relay system residues include Lys-71 and Ser-146. Ser-170 acts as the Acyl-ester intermediate in catalysis.

This sequence belongs to the amidase family. GatA subfamily. Heterotrimer of A, B and C subunits.

The catalysed reaction is L-glutamyl-tRNA(Gln) + L-glutamine + ATP + H2O = L-glutaminyl-tRNA(Gln) + L-glutamate + ADP + phosphate + H(+). Functionally, allows the formation of correctly charged Gln-tRNA(Gln) through the transamidation of misacylated Glu-tRNA(Gln) in organisms which lack glutaminyl-tRNA synthetase. The reaction takes place in the presence of glutamine and ATP through an activated gamma-phospho-Glu-tRNA(Gln). The protein is Glutamyl-tRNA(Gln) amidotransferase subunit A of Lactobacillus gasseri (strain ATCC 33323 / DSM 20243 / BCRC 14619 / CIP 102991 / JCM 1131 / KCTC 3163 / NCIMB 11718 / NCTC 13722 / AM63).